A 742-amino-acid chain; its full sequence is Alcohol dehydrogenase (quinone), dehydrogenase subunit (742 aa).

A signal peptide spans 1–35; the sequence is MTRPASAKRRSLLGILAAGTICAAALPYAAVPARA. E96 is a pyrroloquinoline quinone binding site. A disulfide bond links C142 and C143. Residue R148 participates in pyrroloquinoline quinone binding. E216 contacts Ca(2+). Position 278 (T278) interacts with pyrroloquinoline quinone. Ca(2+) contacts are provided by N298 and D343. D343 serves as the catalytic Proton acceptor. Residues K370 and I584 each coordinate pyrroloquinoline quinone. Positions 636-715 constitute a Cytochrome c domain; that stretch reads KVVDNGYFQY…AIRQYLIKRA (80 aa). Positions 649, 652, 653, and 692 each coordinate heme c. A compositionally biased stretch (basic and acidic residues) spans 722–732; sequence EVDARKNDKNI. A disordered region spans residues 722 to 742; sequence EVDARKNDKNIPENPTLGINP.

It belongs to the bacterial PQQ dehydrogenase family. The alcohol dehydrogenase multicomponent enzyme system is composed of a dehydrogenase subunit I (AdhA) and a cytochrome c subunit II (AdhB). Pyrroloquinoline quinone is required as a cofactor. Ca(2+) serves as cofactor. The cofactor is heme c.

The protein localises to the cell membrane. The enzyme catalyses ethanol + a ubiquinone = a ubiquinol + acetaldehyde. Functionally, dehydrogenase component of the alcohol dehydrogenase multicomponent enzyme system which is involved in the production of acetic acid and in the ethanol oxidase respiratory chain. Quinohemoprotein alcohol dehydrogenase (ADH) catalyzes the oxidation of ethanol to acetaldehyde by transferring electrons to the ubiquinone embedded in the membrane phospholipids. The electrons transfer from ethanol to membranous ubiquinone occurs from pyrroloquinoline quinone (PQQ) to one heme c in subunit I (AdhA), and finally to two heme c in subunit II (AdhB). Besides ubiquinone reduction, ADH also has a ubiquinol (QH2) oxidation reaction which mediates electron transfer from ubiquinol to the non-energy generating bypass oxidase system. The electrons transfer occurs from ubiquinol (QH2) to the additional heme c within subunit II (AdhB). The polypeptide is Alcohol dehydrogenase (quinone), dehydrogenase subunit (Acetobacter aceti).